Consider the following 415-residue polypeptide: Phosphoglycerate kinase (415 aa).

Substrate contacts are provided by residues 27–29 (DIN), arginine 44, 67–70 (HQGR), arginine 124, and arginine 164. Residues glutamate 336 and 362 to 365 (GGHM) each bind ATP.

Belongs to the phosphoglycerate kinase family. In terms of assembly, monomer.

The protein resides in the cytoplasm. The catalysed reaction is (2R)-3-phosphoglycerate + ATP = (2R)-3-phospho-glyceroyl phosphate + ADP. The protein operates within carbohydrate degradation; glycolysis; pyruvate from D-glyceraldehyde 3-phosphate: step 2/5. The protein is Phosphoglycerate kinase of Sulfurisphaera tokodaii (strain DSM 16993 / JCM 10545 / NBRC 100140 / 7) (Sulfolobus tokodaii).